Reading from the N-terminus, the 425-residue chain is UDP-N-acetylglucosamine 1-carboxyvinyltransferase (425 aa).

Residue 23 to 24 (KN) participates in phosphoenolpyruvate binding. Arg100 lines the UDP-N-acetyl-alpha-D-glucosamine pocket. The Proton donor role is filled by Cys124. Cys124 carries the 2-(S-cysteinyl)pyruvic acid O-phosphothioketal modification. UDP-N-acetyl-alpha-D-glucosamine-binding positions include 169 to 172 (KVSV), Asp313, and Val335.

It belongs to the EPSP synthase family. MurA subfamily.

Its subcellular location is the cytoplasm. The enzyme catalyses phosphoenolpyruvate + UDP-N-acetyl-alpha-D-glucosamine = UDP-N-acetyl-3-O-(1-carboxyvinyl)-alpha-D-glucosamine + phosphate. It participates in cell wall biogenesis; peptidoglycan biosynthesis. Cell wall formation. Adds enolpyruvyl to UDP-N-acetylglucosamine. This Wolbachia pipientis subsp. Culex pipiens (strain wPip) protein is UDP-N-acetylglucosamine 1-carboxyvinyltransferase.